We begin with the raw amino-acid sequence, 312 residues long: Tumor necrosis factor receptor type 1-associated DEATH domain protein (312 aa).

Positions Leu-147–Lys-163 match the Nuclear export signal motif. The tract at residues Gly-170–Pro-195 is disordered. Residues Pro-179–Leu-289 enclose the Death domain. Residues Leu-180 to Pro-195 are compositionally biased toward pro residues. An interaction with KRT14 and KRT18 region spans residues Phe-222–Leu-289. A Nuclear localization signal motif is present at residues Arg-231–Leu-244. Arg-235 and Arg-245 each carry a (Microbial infection) N-beta-linked (GlcNAc) arginine glycan.

In terms of assembly, stimulation of TNF-alpha receptor TNFRSF1A leads to the formation of two distinct signaling complexes. Plasma membrane-bound complex I is composed of TNFRSF1A, TRADD, RIPK1, TRAF2 and BIRC2/c-IAP1 or BIRC3 which interacts with CHUCK/IKK-alpha, IKBKB/IKK-beta and IKBKG/IKK-gamma promoting cell survival. Subsequently, TRADD, RIPK1 and TRAF2 dissociate from TNFRSF1A and form cytoplasmic complex II with FADD and caspase CASP8 promoting cell apoptosis. Within complex I, interacts with TNFRSF1A/TNFR1, TRAF2 and kinase RIPK1. Within complex I, interacts with TRPC4AP; the interaction promotes NF-kappa B activation. UXT1 associates with complex I; the interaction prevents the formation of complex II. Within complex I Interacts with scaffold protein DAB2IP. Interacts with autophagy receptor SQSTM1. Interacts with E3 ligase TRIP12. Interacts with kinase HIPK2. Interacts with keratin KRT14. Interacts with keratin KRT18. Interacts with keratins KRT16 and KRT17. Interacts with FADD. Interacts with TOMM70. Interacts with TMC8; the interaction impairs the formation of complex I and facilites complex II formation. Post-translationally, (Microbial infection) Glycosylated at Arg-235 by enteropathogenic E.coli protein NleB1, C.rodentium protein NleB and S.typhimurium proteins Ssek1 and Ssek3: arginine GlcNAcylation prevents homotypic/heterotypic death domain interactions and assembly of the oligomeric TNFRSF1A/TNFR1 complex, thereby disrupting TNF signaling. In terms of tissue distribution, found in all examined tissues.

It is found in the nucleus. The protein localises to the cytoplasm. It localises to the cytoskeleton. Functionally, adapter molecule for TNFRSF1A/TNFR1 that specifically associates with the cytoplasmic domain of activated TNFRSF1A/TNFR1 mediating its interaction with FADD. Overexpression of TRADD leads to two major TNF-induced responses, apoptosis and activation of NF-kappa-B. The nuclear form acts as a tumor suppressor by preventing ubiquitination and degradation of isoform p19ARF/ARF of CDKN2A by TRIP12: acts by interacting with TRIP12, leading to disrupt interaction between TRIP12 and isoform p19ARF/ARF of CDKN2A. This chain is Tumor necrosis factor receptor type 1-associated DEATH domain protein, found in Homo sapiens (Human).